The sequence spans 160 residues: Cyclic pyranopterin monophosphate synthase (160 aa).

Substrate-binding positions include 77–79 (MCH) and 114–115 (ME). Residue aspartate 129 is part of the active site.

This sequence belongs to the MoaC family. As to quaternary structure, homohexamer; trimer of dimers.

The enzyme catalyses (8S)-3',8-cyclo-7,8-dihydroguanosine 5'-triphosphate = cyclic pyranopterin phosphate + diphosphate. The protein operates within cofactor biosynthesis; molybdopterin biosynthesis. Its function is as follows. Catalyzes the conversion of (8S)-3',8-cyclo-7,8-dihydroguanosine 5'-triphosphate to cyclic pyranopterin monophosphate (cPMP). The chain is Cyclic pyranopterin monophosphate synthase from Listeria monocytogenes serotype 4b (strain F2365).